We begin with the raw amino-acid sequence, 1232 residues long: DNA-directed RNA polymerase subunit beta (1232 aa).

Residues serine 1170 to histidine 1232 form a disordered region. The segment covering valine 1171–valine 1180 has biased composition (acidic residues). A compositionally biased stretch (basic and acidic residues) spans proline 1189–glutamate 1198. The span at aspartate 1199–histidine 1232 shows a compositional bias: acidic residues.

Belongs to the RNA polymerase beta chain family. The RNAP catalytic core consists of 2 alpha, 1 beta, 1 beta' and 1 omega subunit. When a sigma factor is associated with the core the holoenzyme is formed, which can initiate transcription.

It catalyses the reaction RNA(n) + a ribonucleoside 5'-triphosphate = RNA(n+1) + diphosphate. Its function is as follows. DNA-dependent RNA polymerase catalyzes the transcription of DNA into RNA using the four ribonucleoside triphosphates as substrates. In Clostridium botulinum (strain Okra / Type B1), this protein is DNA-directed RNA polymerase subunit beta.